The following is a 331-amino-acid chain: Thioredoxin-like fold domain-containing protein MRL7, chloroplastic (331 aa).

The N-terminal 59 residues, 1 to 59, are a transit peptide targeting the chloroplast; it reads MSFFAVACSAPRSSMLLTGLNSSFSDMHRSPLFVFPVTISSRSVKRFAAVSSDSVLDPE. Disordered regions lie at residues 52–105 and 141–160; these read SDSV…ADAV and GVDEEEEEEEEMVVEEEDPD. Residues 142 to 160 show a composition bias toward acidic residues; sequence VDEEEEEEEEMVVEEEDPD.

As to quaternary structure, component of the transcriptionally active chromosome (TAC) complexes. Interacts with FSD2 and PRDA1. Interacts with FSD3 and CITRX/TRXZ. Binds to PTAC12/HMR/PAP5. In terms of tissue distribution, expressed in leaves, shoots, stems, cauline leaves, flower buds, flowers and siliques.

It is found in the plastid. It localises to the chloroplast. The protein resides in the chloroplast stroma. The protein localises to the chloroplast nucleoid. Its subcellular location is the nucleus. In terms of biological role, plays an essential role in early steps of chloroplast development. Involved in the regulation of plastid gene expression. May positively regulate plastid-encoded RNA polymerase (PEP) activity through binding to FSD3 and CITRX/TRXZ. Involved in redox-mediated regulation of chloroplast development. Possesses disulfide reductase activity in vitro. Required for the proper function of the plastid transcriptional machinery and protein accumulation in thylakoid membranes. May function as molecular chaperone to ensure proper organization of the nucleoids in chloroplasts. May mediate some aspect of thylakoid structure or function that controls non-photochemical quenching (NPQ). Participates in the early light signaling events of photobody biogenesis in chloroplasts. May mediate the degradation of two repressors of chloroplast biogenesis, PIF1 and PIF3 in nucleus. Collaboratively with PTAC12/HMR/PAP5, involved in the regulation of thermoresponsive responses via the stabilization of PIF4 in the daytime to initiate thermomorphogenesis. In Arabidopsis thaliana (Mouse-ear cress), this protein is Thioredoxin-like fold domain-containing protein MRL7, chloroplastic.